Consider the following 87-residue polypeptide: Small ribosomal subunit protein bS20 (87 aa).

The segment covering 1-11 (MANHKSALKRI) has biased composition (basic residues). The segment at 1-23 (MANHKSALKRIKQTEKRTERNRH) is disordered.

The protein belongs to the bacterial ribosomal protein bS20 family.

Binds directly to 16S ribosomal RNA. The protein is Small ribosomal subunit protein bS20 of Geotalea uraniireducens (strain Rf4) (Geobacter uraniireducens).